The primary structure comprises 422 residues: MSARAGIVVTGTEVLTGRVQDQNGPWLADRLLELGVELGHITLCGDRPADIEAQLRFLAGQGVDLIITSGGLGPTADDMTVEIVSRFCGRELVLDAAVEARIGEIVKGMMARFPGVDADAVLAANRKQALVPAGAVVLDPVGTAPGVVVAGSPTVVVLPGPPRELQPMWHAAVATDAVQTAIAGRTRYQQQTIRMFGLPESGLADTLRDAEKTVADFDRLEITTCLRRGELEIVTRFEPRDTATYAALEGLLRDRHAREIFSTDGALVDDQIAELLAGRSIATAESCTAGMLAARLTERAGSSAYVAGGVVAYSNAAKTELLGVDAGLIERHGAVSEPVAEAMAAGALQRFGADTAVAITGIAGPGGGTPTKPVGTVCFSVALAGGASVTRATRLPGNRSDIRERSTTVAMHLLRRALTGGG.

It belongs to the CinA family.

This Mycolicibacterium vanbaalenii (strain DSM 7251 / JCM 13017 / BCRC 16820 / KCTC 9966 / NRRL B-24157 / PYR-1) (Mycobacterium vanbaalenii) protein is CinA-like protein.